A 61-amino-acid polypeptide reads, in one-letter code: Small ribosomal subunit protein uS14 (61 aa).

4 residues coordinate Zn(2+): Cys-24, Cys-27, Cys-40, and Cys-43.

Belongs to the universal ribosomal protein uS14 family. Zinc-binding uS14 subfamily. In terms of assembly, part of the 30S ribosomal subunit. Contacts proteins S3 and S10. Zn(2+) is required as a cofactor.

Functionally, binds 16S rRNA, required for the assembly of 30S particles and may also be responsible for determining the conformation of the 16S rRNA at the A site. The protein is Small ribosomal subunit protein uS14 of Staphylococcus aureus (strain USA300 / TCH1516).